A 540-amino-acid chain; its full sequence is MMGSPVSHLLAGFCVWVVLGWVGGSVPNLGPAEQEQNHYLAQLFGLYGENGTLTAGGLARLLHSLGLGRVQGLRLGQHGPLTGRAASPAADNSTHRPQNPELSVDVWAGMPLGPSGWGDLEESKAPHLPRGPAPSGLDLLHRLLLLDHSLADHLNEDCLNGSQLLVNFGLSPAAPLTPRQFALLCPALLYQIDSRVCIGAPAPAPPGDLLSALLQSALAVLLLSLPSPLSLLLLRLLGPRLLRPLLGFLGALAVGTLCGDALLHLLPHAQEGRHAGPGGLPEKDLGPGLSVLGGLFLLFVLENMLGLLRHRGLRPRCCRRKRRNLETRNLDPENGSGMALQPLQAAPEPGAQGQREKNSQHPPALAPPGHQGHSHGHQGGTDITWMVLLGDGLHNLTDGLAIGAAFSDGFSSGLSTTLAVFCHELPHELGDFAMLLQSGLSFRRLLLLSLVSGALGLGGAVLGVGLSLGPVPLTPWVFGVTAGVFLYVALVDMLPALLRPPEPLPTPHVLLQGLGLLLGGGLMLAITLLEERLLPVTTEG.

Positions 1–20 (MMGSPVSHLLAGFCVWVVLG) are cleaved as a signal peptide. Topologically, residues 21 to 212 (WVGGSVPNLG…PAPPGDLLSA (192 aa)) are extracellular. Asparagine 50 is a glycosylation site (N-linked (GlcNAc...) asparagine). A disordered region spans residues 78-101 (HGPLTGRAASPAADNSTHRPQNPE). The span at 90–101 (ADNSTHRPQNPE) shows a compositional bias: polar residues. The N-linked (GlcNAc...) asparagine glycan is linked to asparagine 160. The chain crosses the membrane as a helical span at residues 213-233 (LLQSALAVLLLSLPSPLSLLL). Over 234–244 (LRLLGPRLLRP) the chain is Cytoplasmic. A helical membrane pass occupies residues 245–265 (LLGFLGALAVGTLCGDALLHL). The Extracellular portion of the chain corresponds to 266–287 (LPHAQEGRHAGPGGLPEKDLGP). A helical transmembrane segment spans residues 288–308 (GLSVLGGLFLLFVLENMLGLL). The Cytoplasmic segment spans residues 309 to 444 (RHRGLRPRCC…LLQSGLSFRR (136 aa)). The interval 324 to 377 (NLETRNLDPENGSGMALQPLQAAPEPGAQGQREKNSQHPPALAPPGHQGHSHGH) is disordered. Serine 336 is modified (phosphoserine). Histidine 375 is modified (pros-methylhistidine). A helical membrane pass occupies residues 445–465 (LLLLSLVSGALGLGGAVLGVG). The Extracellular segment spans residues 466 to 470 (LSLGP). The helical transmembrane segment at 471 to 491 (VPLTPWVFGVTAGVFLYVALV) threads the bilayer. Residues 492–508 (DMLPALLRPPEPLPTPH) are Cytoplasmic-facing. Residues 509–529 (VLLQGLGLLLGGGLMLAITLL) traverse the membrane as a helical segment. Residues 530–540 (EERLLPVTTEG) are Extracellular-facing.

The protein belongs to the ZIP transporter (TC 2.A.5) family. As to quaternary structure, homodimer. Post-translationally, methylated at His-375 by METTL9. In terms of processing, N-Glycosylated. Expressed in liver, kidney, pancreas, small intestine, colon, spleen, fetal liver and fetal kidney.

The protein localises to the basolateral cell membrane. The enzyme catalyses Zn(2+)(in) = Zn(2+)(out). Its function is as follows. Uniporter that transports zinc(2+) into polarized cells of enterocytes, pancreatic acinar and endoderm cells across the basolateral membrane and participates, notably, in zinc excretion from the intestine by the uptake of zinc from the blood into the intestine. The transport mechanism is temperature- and concentration-dependent and saturable. In addition, is also a high affinity copper transporter in vitro. Also may regulate glucose-stimulated insulin secretion (GSIS) in islets primarily through the zinc-activated SIRT1-PPARGC1A axis. Could regulate the BMP/TGF-beta (bone morphogenetic protein/transforming growth factor-beta) signaling pathway and modulates extracellular matrix (ECM) proteins of the sclera. Plays a role in eye development. This is Zinc transporter ZIP5 from Homo sapiens (Human).